Here is a 420-residue protein sequence, read N- to C-terminus: Tyrosine--tRNA ligase (420 aa).

Position 33 (Tyr33) interacts with L-tyrosine. Positions 38–47 match the 'HIGH' region motif; sequence PTADSLHVGH. L-tyrosine is bound by residues Tyr167 and Gln171. Positions 227-231 match the 'KMSKS' region motif; that stretch reads KFGKT. Lys230 contributes to the ATP binding site. One can recognise an S4 RNA-binding domain in the interval 353–419; sequence LTVADLLVKV…GKRNYALVKV (67 aa).

It belongs to the class-I aminoacyl-tRNA synthetase family. TyrS type 1 subfamily. In terms of assembly, homodimer.

It localises to the cytoplasm. It carries out the reaction tRNA(Tyr) + L-tyrosine + ATP = L-tyrosyl-tRNA(Tyr) + AMP + diphosphate + H(+). Catalyzes the attachment of tyrosine to tRNA(Tyr) in a two-step reaction: tyrosine is first activated by ATP to form Tyr-AMP and then transferred to the acceptor end of tRNA(Tyr). This Anaeromyxobacter dehalogenans (strain 2CP-C) protein is Tyrosine--tRNA ligase.